The primary structure comprises 264 residues: MSEMQFGKHLDELRRRALRVVVITGAVTAFLLAFHAEPAELWGATVYYPVPDPLHNMAAQITDHMRAALVPEGVELIQTTPGQAFFAQVYIAALVGVTVSTPVAVRELAAFLRPALRESEIHVGRSISAPAVGLFAAGCAFSYIVVIPYILDFLYKIGESAGITTFLNVMDFVSFVLQFLLAFGISFQLPLVMFAVTASGMVDGRFWRRNIRYALLGIVIFGAAITPDGSGVTMWFVAGPMIGLYFAGMFFAERRERKEKSAGA.

The next 6 helical transmembrane spans lie at 20–40 (VVVI…EPAE), 85–105 (FFAQ…PVAV), 131–151 (AVGL…PYIL), 175–195 (FVLQ…VMFA), 211–231 (IRYA…DGSG), and 232–252 (VTMW…MFFA).

Belongs to the TatC family. In terms of assembly, forms a complex with TatA.

It localises to the cell membrane. Its function is as follows. Part of the twin-arginine translocation (Tat) system that transports large folded proteins containing a characteristic twin-arginine motif in their signal peptide across membranes. The chain is Sec-independent protein translocase protein TatC from Cenarchaeum symbiosum (strain A).